The sequence spans 76 residues: Sec-independent protein translocase protein TatA (76 aa).

A helical transmembrane segment spans residues 1 to 21 (MGGLSIWHWLIVLLIVALVFG). The interval 40–76 (KDGMKEGETPADAQQLPRTGTVDVNAKETTRSDSNKA) is disordered. Positions 64-76 (NAKETTRSDSNKA) are enriched in basic and acidic residues.

Belongs to the TatA/E family. As to quaternary structure, the Tat system comprises two distinct complexes: a TatABC complex, containing multiple copies of TatA, TatB and TatC subunits, and a separate TatA complex, containing only TatA subunits. Substrates initially bind to the TatABC complex, which probably triggers association of the separate TatA complex to form the active translocon.

It is found in the cell inner membrane. Functionally, part of the twin-arginine translocation (Tat) system that transports large folded proteins containing a characteristic twin-arginine motif in their signal peptide across membranes. TatA could form the protein-conducting channel of the Tat system. This Burkholderia ambifaria (strain MC40-6) protein is Sec-independent protein translocase protein TatA.